We begin with the raw amino-acid sequence, 2175 residues long: Non-reducing polyketide synthase PKS1 (2175 aa).

Residues 5–242 (LLFGDQTAEQ…VSIPIYGPYH (238 aa)) form an N-terminal acylcarrier protein transacylase domain (SAT) region. The 433-residue stretch at 369-801 (TDKIAIVGMA…GGNTALLIED (433 aa)) folds into the Ketosynthase family 3 (KS3) domain. Catalysis depends on for beta-ketoacyl synthase activity residues Cys541, His676, and His719. A malonyl-CoA:ACP transacylase (MAT) domain region spans residues 900–1212 (FCFTGQGSQY…ISTSICHLFT (313 aa)). Residue Ser988 is the For acyl/malonyl transferase activity of the active site. The segment at 1285 to 1604 (STSCQNVISE…RKVLNVFLPP (320 aa)) is product template (PT) domain. Positions 1289–1424 (QNVISEEFDG…CTIRYEDKAV (136 aa)) are N-terminal hotdog fold. The PKS/mFAS DH domain occupies 1289 to 1599 (QNVISEEFDG…FQQIPRKVLN (311 aa)). Residue His1321 is the Proton acceptor; for dehydratase activity of the active site. Residues 1452–1599 (AHKVQRGMAY…FQQIPRKVLN (148 aa)) form a C-terminal hotdog fold region. Catalysis depends on Asp1512, which acts as the Proton donor; for dehydratase activity. The segment at 1640–1664 (PVRKSAGPAKAAAAPSMPKPSKVAA) is disordered. Residues 1643-1664 (KSAGPAKAAAAPSMPKPSKVAA) show a composition bias toward low complexity. Residues 1666–1743 (KPAGSMVDKV…EMKKYFSQFN (78 aa)) form the Carrier 1 domain. Ser1703 carries the post-translational modification O-(pantetheine 4'-phosphoryl)serine. The disordered stretch occupies residues 1766–1804 (ATPFDEMSTPASSAPSVPQSDAGKPSPDSPTGDSLSDDV). A compositionally biased stretch (polar residues) spans 1774–1784 (TPASSAPSVPQ). A Carrier 2 domain is found at 1801-1878 (SDDVGDVSIA…DIENALGMRP (78 aa)). At Ser1838 the chain carries O-(pantetheine 4'-phosphoryl)serine. Residues 1879 to 1899 (KPKAVGPKLSKPSTKTDMNEV) are disordered. Over residues 1889-1899 (KPSTKTDMNEV) the composition is skewed to polar residues. Residues 1932-2158 (KVFFLPDGSG…GHHFSMMKDP (227 aa)) are claisen cyclase domain. The active-site For Claisen cyclase activity is Ser2002.

Pantetheine 4'-phosphate serves as cofactor.

It carries out the reaction 6 malonyl-CoA + acetyl-CoA + 6 H(+) = naphtopyrone YWA1 + 6 CO2 + 7 CoA + H2O. It participates in pigment biosynthesis; melanin biosynthesis. Its function is as follows. Non-reducing polyketide synthase; part of the gene cluster 29 that mediates the biosynthesis of mediates the biosynthesis of dihydroxynaphthalene (DHN)-melanin, a bluish-green pigment and a structural component of the conidial wall. The first step of the pathway is the production of the heptaketide naphtopyrone YWA1 by the polyketide synthase PKS1 though condensation of acetyl-CoA with malonyl-CoA. This chain is Non-reducing polyketide synthase PKS1, found in Zymoseptoria tritici (strain CBS 115943 / IPO323) (Speckled leaf blotch fungus).